A 215-amino-acid chain; its full sequence is Adenylate kinase (215 aa).

G10–T15 lines the ATP pocket. Residues S30–V59 are NMP. Residues T31, R36, L57 to V59, G85 to R88, and Q92 contribute to the AMP site. The tract at residues G126–D163 is LID. R127 contributes to the ATP binding site. Zn(2+) contacts are provided by C130 and C133. Residue S136–F137 participates in ATP binding. C150 and C153 together coordinate Zn(2+). Residues R160 and R171 each coordinate AMP. Q198 contributes to the ATP binding site.

This sequence belongs to the adenylate kinase family. Monomer.

It is found in the cytoplasm. The catalysed reaction is AMP + ATP = 2 ADP. The protein operates within purine metabolism; AMP biosynthesis via salvage pathway; AMP from ADP: step 1/1. Functionally, catalyzes the reversible transfer of the terminal phosphate group between ATP and AMP. Plays an important role in cellular energy homeostasis and in adenine nucleotide metabolism. The sequence is that of Adenylate kinase from Caldicellulosiruptor bescii (strain ATCC BAA-1888 / DSM 6725 / KCTC 15123 / Z-1320) (Anaerocellum thermophilum).